Here is a 643-residue protein sequence, read N- to C-terminus: Long-chain fatty acid transport protein 4 (643 aa).

Helical transmembrane passes span leucine 20 to isoleucine 42 and phenylalanine 139 to isoleucine 156. AMP is bound at residue tyrosine 243–lysine 254.

This sequence belongs to the ATP-dependent AMP-binding enzyme family. In terms of tissue distribution, expressed at highest levels in brain, testis, colon and kidney. Expressed at medium levels in heart and liver, small intestine and stomach. Expressed at low levels in peripheral leukocytes, bone marrow, skeletal muscle and aorta. Expressed in adipose tissue. Expressed in brain gray matter.

The protein resides in the endoplasmic reticulum membrane. The catalysed reaction is a fatty acid(in) = a fatty acid(out). The enzyme catalyses (9Z,12Z)-octadecadienoate(out) = (9Z,12Z)-octadecadienoate(in). It carries out the reaction (9Z)-octadecenoate(out) = (9Z)-octadecenoate(in). It catalyses the reaction hexadecanoate(out) = hexadecanoate(in). The catalysed reaction is a long-chain fatty acid + ATP + CoA = a long-chain fatty acyl-CoA + AMP + diphosphate. The enzyme catalyses hexadecanoate + ATP + CoA = hexadecanoyl-CoA + AMP + diphosphate. It carries out the reaction (E)-hexadec-2-enoate + ATP + CoA = (2E)-hexadecenoyl-CoA + AMP + diphosphate. It catalyses the reaction (9Z)-octadecenoate + ATP + CoA = (9Z)-octadecenoyl-CoA + AMP + diphosphate. The catalysed reaction is (5Z,8Z,11Z,14Z)-eicosatetraenoate + ATP + CoA = (5Z,8Z,11Z,14Z)-eicosatetraenoyl-CoA + AMP + diphosphate. The enzyme catalyses a very long-chain fatty acid + ATP + CoA = a very long-chain fatty acyl-CoA + AMP + diphosphate. It carries out the reaction tetracosanoate + ATP + CoA = tetracosanoyl-CoA + AMP + diphosphate. Mediates the levels of long-chain fatty acids (LCFA) in the cell by facilitating their transport across cell membranes. Appears to be the principal fatty acid transporter in small intestinal enterocytes. Also functions as an acyl-CoA ligase catalyzing the ATP-dependent formation of fatty acyl-CoA using LCFA and very-long-chain fatty acids (VLCFA) as substrates, which prevents fatty acid efflux from cells and might drive more fatty acid uptake. Plays a role in the formation of the epidermal barrier. Required for fat absorption in early embryogenesis. Probably involved in fatty acid transport across the blood barrier. Indirectly inhibits RPE65 via substrate competition and via production of VLCFA derivatives like lignoceroyl-CoA. Prevents light-induced degeneration of rods and cones. This chain is Long-chain fatty acid transport protein 4, found in Homo sapiens (Human).